The primary structure comprises 500 residues: Pentatricopeptide repeat-containing protein At1g05750, chloroplastic (500 aa).

The transit peptide at 1–54 (MGLLPVVGITSPALITHKNHANPKIQRHNQSTSETTVSWTSRINLLTRNGRLAE) directs the protein to the chloroplast. PPR repeat units lie at residues 35-69 (TTVSWTSRINLLTRNGRLAEAAKEFSDMTLAGVEP), 70-106 (NHITFIALLSGCGDFTSGSEALGDLLHGYACKLGLDR), 108-138 (HVMVGTAIIGMYSKRGRFKKARLVFDYMEDK), 139-173 (NSVTWNTMIDGYMRSGQVDNAAKMFDKMPERDLIS), 174-204 (WTAMINGFVKKGYQEEALLWFREMQISGVKP), 205-239 (DYVAIIAALNACTNLGALSFGLWVHRYVLSQDFKN), 240-270 (NVRVSNSLIDLYCRCGCVEFARQVFYNMEKR), 271-305 (TVVSWNSVIVGFAANGNAHESLVYFRKMQEKGFKP), 306-336 (DAVTFTGALTACSHVGLVEEGLRYFQIMKCD), and 342-376 (RIEHYGCLVDLYSRAGRLEDALKLVQSMPMKPNEV). The segment at 377–453 (VIGSLLAACS…QPGFSSIEID (77 aa)) is type E motif. The interval 454–484 (DCMHVFMAGDNAHVETTYIREVLELISSDLR) is type E(+) motif.

It belongs to the PPR family. PCMP-E subfamily.

It is found in the plastid. The protein resides in the chloroplast. The protein is Pentatricopeptide repeat-containing protein At1g05750, chloroplastic (PDE247) of Arabidopsis thaliana (Mouse-ear cress).